The sequence spans 303 residues: tRNA pseudouridine synthase-like 1 (303 aa).

The active-site Nucleophile is Asp-66. Ser-84 carries the phosphoserine modification. Residue Tyr-130 participates in substrate binding.

Belongs to the tRNA pseudouridine synthase TruA family.

It catalyses the reaction a uridine in tRNA = a pseudouridine in tRNA. The chain is tRNA pseudouridine synthase-like 1 (PUSL1) from Homo sapiens (Human).